Reading from the N-terminus, the 636-residue chain is Carbon monoxide dehydrogenase 1 (636 aa).

[4Fe-4S] cluster is bound by residues C38, C46, C47, C50, C55, and C69. H262, C297, C335, C448, C478, and C528 together coordinate [Ni-4Fe-5S] cluster.

This sequence belongs to the Ni-containing carbon monoxide dehydrogenase family. In terms of assembly, homodimer. It depends on [4Fe-4S] cluster as a cofactor. The cofactor is [Ni-4Fe-5S] cluster.

It localises to the cytoplasm. The protein resides in the cell membrane. The catalysed reaction is CO + 2 oxidized [2Fe-2S]-[ferredoxin] + H2O = 2 reduced [2Fe-2S]-[ferredoxin] + CO2 + 2 H(+). With respect to regulation, inactivated by O(2). Its function is as follows. CODH oxidizes carbon monoxide coupled, via CooF, to the reduction of a hydrogen cation by a hydrogenase (possibly CooH). This is Carbon monoxide dehydrogenase 1 (cooS1) from Carboxydothermus hydrogenoformans (strain ATCC BAA-161 / DSM 6008 / Z-2901).